The chain runs to 1001 residues: MARQEQANDVFALTSFLYGGNADYIEELYAKYEDDPNSVDPQWRDFFAKLGDNADDVKKNAEGASWTRKNWPIAANGELISALDGNWAEVEKHVTDKLKGKAAKGEAKGATGAALTSEEITQAARDSVRAIMMIRAYRMRGHLHANLDPLGLSEKPNDYNELEPENYGFTPADYNRKIFIDNVLGLEYATVPEMLDILKRTYCGTIGVEFMHISDPAEKAWIQERIEGPDKKVAFTPEGKKAILSKLIEAEGFEQFIDVKYKGTKRFGLDGGESLIPALEQIVKRGGAMGVKEIIFGMAHRGRLNVLSQVMGKPHRAIFHEFKGGSYAPDDVEGSGDVKYHLGASSDREFDGNKVHLSLTANPSHLEIVNPVVMGKARAKQDLLAGRTRDDMVPLATRAKVLPLLLHGDAAFAGQGVVAECLGLSGLKGHRVAGTLHFIINNQIGFTTNPAFSRSSPYPSDVAKMIEAPIFHVNGDDPEAVVFAAKVATEFRMTFHKPVVIDMFCYRRFGHNEGDEPSFTQPLMYKAIRAHKTTVQLYSDKLIAEGLIKQEEIDQMKAQWRENLETEFDAGQSYKPNKADWLDGAWAGLRTADNADEQRRGKTAVPMKTLKEIGKKLVEVPKDFHVHRTIQRFLDNRAKMMETGEGIDWATAESLAFGSLVAEGSPIRLSGQDVERGTFSQRHTVLYDQETQNRYIPLNNIQKGQAIYEAINSMLSEEAVLGYEYGYSLSDPRALVLWEAQFGDFANGAQVVFDQFISSGERKWLRMSGLVCLLPHGYEGQGPEHSSARLERWLQMCAEDNMQVANVTTPANYFHILRRQMKRDFRKPLIMMTPKSLLRHKRAVSTLNELSGESSFHRLLWDDAQYNKDEGIKLQKDAKIRRVVLCSGKVYYDLYEEREKRGIDDVYLLRVEQLYPFPAKALINELSRFRHAEMVWCQEEPKNMGAWSFIDPYLEWVLAHIDAKHQRVRYAGRPAAASPATGLMSKHLAQLAAFLEDALGN.

It belongs to the alpha-ketoglutarate dehydrogenase family. As to quaternary structure, homodimer. Part of the 2-oxoglutarate dehydrogenase (OGDH) complex composed of E1 (2-oxoglutarate dehydrogenase), E2 (dihydrolipoamide succinyltransferase) and E3 (dihydrolipoamide dehydrogenase); the complex contains multiple copies of the three enzymatic components (E1, E2 and E3). Thiamine diphosphate serves as cofactor.

The enzyme catalyses N(6)-[(R)-lipoyl]-L-lysyl-[protein] + 2-oxoglutarate + H(+) = N(6)-[(R)-S(8)-succinyldihydrolipoyl]-L-lysyl-[protein] + CO2. Its function is as follows. E1 component of the 2-oxoglutarate dehydrogenase (OGDH) complex which catalyzes the decarboxylation of 2-oxoglutarate, the first step in the conversion of 2-oxoglutarate to succinyl-CoA and CO(2). In Brucella anthropi (strain ATCC 49188 / DSM 6882 / CCUG 24695 / JCM 21032 / LMG 3331 / NBRC 15819 / NCTC 12168 / Alc 37) (Ochrobactrum anthropi), this protein is 2-oxoglutarate dehydrogenase E1 component.